Here is a 661-residue protein sequence, read N- to C-terminus: Pentatricopeptide repeat-containing protein At3g04750, mitochondrial (661 aa).

The N-terminal 18 residues, 1 to 18 (MCFVLLLRRGFRLFGTEC), are a transit peptide targeting the mitochondrion. 13 PPR repeats span residues 99–131 (NVFV…RVSP), 132–163 (DRQT…GCLS), 165–195 (GNYL…MPHP), 196–230 (DVSS…GIEP), 231–265 (DEYT…GPVY), 268–298 (NLIL…MKKK), 299–333 (DMRS…DLVS), 334–366 (WNSL…KVKP), 367–401 (DRVT…QLKG), 402–432 (DAFL…ATEK), 433–467 (DVAL…GVTP), 468–498 (NNVT…MKDK), and 504–539 (ETEH…PSQS). The segment at 540 to 615 (MWGSILSACR…TAGYSSVVGV (76 aa)) is type E motif. The segment at 616–647 (EGLHRFVAAEKQNHPRWTEIKRILQHLYNEMK) is type E(+) motif.

Belongs to the PPR family. PCMP-E subfamily.

It is found in the mitochondrion. This Arabidopsis thaliana (Mouse-ear cress) protein is Pentatricopeptide repeat-containing protein At3g04750, mitochondrial (PCMP-E81).